The following is a 245-amino-acid chain: Carboxymethylenebutenolidase homolog (245 aa).

An N-acetylalanine modification is found at alanine 2. At lysine 36 the chain carries N6-acetyllysine. Residues cysteine 132, aspartate 179, and histidine 212 contribute to the active site. At serine 223 the chain carries Phosphoserine.

This sequence belongs to the dienelactone hydrolase family. As to expression, widely expressed, with highest levels in liver, followed by kidney, small intestine and colon. Present in liver and intestine (at protein level).

The protein localises to the cytoplasm. The protein resides in the cytosol. With respect to regulation, strongly inhibited by p-chloromercuribenzoate (PCMB). Partially inhibited by bis-p-nitrophenylphosphate (BNPP). Not inhibited by DFP, PMSF, eserine or EDTA. In terms of biological role, cysteine hydrolase. Can convert the prodrug olmesartan medoxomil into its pharmacologically active metabolite olmerstatan, an angiotensin receptor blocker, in liver and intestine. May also activate beta-lactam antibiotics faropenem medoxomil and lenampicillin. In Homo sapiens (Human), this protein is Carboxymethylenebutenolidase homolog (CMBL).